The following is a 396-amino-acid chain: 1-deoxy-D-xylulose 5-phosphate reductoisomerase (396 aa).

NADPH is bound by residues threonine 10, glycine 11, serine 12, isoleucine 13, glutamine 38, and asparagine 124. A 1-deoxy-D-xylulose 5-phosphate-binding site is contributed by lysine 125. Position 126 (glutamate 126) interacts with NADPH. Residue aspartate 150 participates in Mn(2+) binding. The 1-deoxy-D-xylulose 5-phosphate site is built by serine 151, glutamate 152, serine 179, and histidine 202. Glutamate 152 serves as a coordination point for Mn(2+). Glycine 208 contributes to the NADPH binding site. 1-deoxy-D-xylulose 5-phosphate is bound by residues serine 215, asparagine 220, lysine 221, and glutamate 224. Glutamate 224 lines the Mn(2+) pocket.

This sequence belongs to the DXR family. Requires Mg(2+) as cofactor. Mn(2+) is required as a cofactor.

The catalysed reaction is 2-C-methyl-D-erythritol 4-phosphate + NADP(+) = 1-deoxy-D-xylulose 5-phosphate + NADPH + H(+). Its pathway is isoprenoid biosynthesis; isopentenyl diphosphate biosynthesis via DXP pathway; isopentenyl diphosphate from 1-deoxy-D-xylulose 5-phosphate: step 1/6. Functionally, catalyzes the NADPH-dependent rearrangement and reduction of 1-deoxy-D-xylulose-5-phosphate (DXP) to 2-C-methyl-D-erythritol 4-phosphate (MEP). The chain is 1-deoxy-D-xylulose 5-phosphate reductoisomerase from Ralstonia pickettii (strain 12J).